Reading from the N-terminus, the 103-residue chain is Large ribosomal subunit protein bL21 (103 aa).

The protein belongs to the bacterial ribosomal protein bL21 family. Part of the 50S ribosomal subunit. Contacts protein L20.

Functionally, this protein binds to 23S rRNA in the presence of protein L20. The protein is Large ribosomal subunit protein bL21 of Desulfitobacterium hafniense (strain DSM 10664 / DCB-2).